The primary structure comprises 518 residues: Sensory neuron membrane protein 1 (518 aa).

Over 1 to 8 the chain is Cytoplasmic; sequence MKTAEKLG. The helical transmembrane segment at 9–29 threads the bilayer; it reads IIGTTISIFGIGFGWGVFPWL. Residues 30 to 456 lie on the Extracellular side of the membrane; the sequence is IRMQIGRVSL…ELFRILQFLD (427 aa). 6 N-linked (GlcNAc...) asparagine glycosylation sites follow: Asn-64, Asn-186, Asn-225, Asn-316, Asn-334, and Asn-381. Intrachain disulfides connect Cys-265–Cys-330, Cys-294–Cys-349, and Cys-332–Cys-338. Residues 457-477 form a helical membrane-spanning segment; sequence VIKWVITLFGAGVVSGGVGLY. The Cytoplasmic portion of the chain corresponds to 478–518; that stretch reads YKEKNSLPITPTSSATSKKIDNPTDKTTTHELGHTNFGYIN.

This sequence belongs to the CD36 family.

It is found in the cell membrane. Functionally, plays an olfactory role that is not restricted to pheromone sensitivity. The chain is Sensory neuron membrane protein 1 from Pediculus humanus subsp. corporis (Body louse).